A 113-amino-acid polypeptide reads, in one-letter code: uncharacterized protein (113 aa).

This is an uncharacterized protein from Haemophilus influenzae (strain ATCC 51907 / DSM 11121 / KW20 / Rd).